The chain runs to 234 residues: Purine nucleoside phosphorylase DeoD-type (234 aa).

Histidine 5 serves as a coordination point for a purine D-ribonucleoside. Phosphate is bound by residues glycine 21, arginine 25, arginine 44, and 88 to 91 (RVGT). Residues 178-180 (EME) and 202-203 (SD) each bind a purine D-ribonucleoside. Catalysis depends on aspartate 203, which acts as the Proton donor.

The protein belongs to the PNP/UDP phosphorylase family. In terms of assembly, homohexamer; trimer of homodimers.

It catalyses the reaction a purine D-ribonucleoside + phosphate = a purine nucleobase + alpha-D-ribose 1-phosphate. The catalysed reaction is a purine 2'-deoxy-D-ribonucleoside + phosphate = a purine nucleobase + 2-deoxy-alpha-D-ribose 1-phosphate. Catalyzes the reversible phosphorolytic breakdown of the N-glycosidic bond in the beta-(deoxy)ribonucleoside molecules, with the formation of the corresponding free purine bases and pentose-1-phosphate. This chain is Purine nucleoside phosphorylase DeoD-type, found in Lactococcus lactis subsp. lactis (strain IL1403) (Streptococcus lactis).